The sequence spans 456 residues: MNYPAEPFRIKSVETVSMISRDERVKKMQEAGYNTFLLNSKDIYIDLLTDSGTNAMSDKQWAGMMIGDEAYAGSENFYHLEKTVKELFGFKHIVPTHQGRGAENLLSQLAIKPGQYVAGNMYFTTTRFHQEKNGATFVDIVRDEAHDASLNLPFKGDIDLNKLATLIKEKGAENIAYICLAVTVNLAGGQPVSMANMRAVHEMASTYGIKIFYDATRCVENAYFIKEQEAGYENVSIKDIVHEMFSYADGCTMSGKKDCLVNIGGFLCMNDEEMFSAAKELVVVYEGMPSYGGLAGRDMEAMAIGLREAMQYEYIEHRVKQVRYLGDKLREAGVPIVEPTGGHAVFLDARRFCPHLTQDQFPAQSLAASIYMETGVRSMERGIVSAGRSKETGENHRPKLETVRLTIPRRVYTYAHMDVVADGIIKLYQHKEDIRGLTFVYEPKQLRFFTARFDFI.

K257 carries the N6-(pyridoxal phosphate)lysine modification.

It belongs to the beta-eliminating lyase family. In terms of assembly, homotetramer. It depends on pyridoxal 5'-phosphate as a cofactor. In terms of processing, contains L-DOPA (3',4'-dihydroxyphenylalanine).

The protein localises to the cytoplasm. The catalysed reaction is L-tyrosine + H2O = phenol + pyruvate + NH4(+). The sequence is that of Tyrosine phenol-lyase (tpl) from Enterobacter agglomerans (Erwinia herbicola).